The sequence spans 399 residues: Subtilisin-like protease 4 (399 aa).

The N-terminal stretch at 1–19 (MVCLKTLSVFLAAFAAADA) is a signal peptide. The propeptide occupies 20–118 (RAVFKTQGHK…VEQDQVVRIS (99 aa)). An Inhibitor I9 domain is found at 38–117 (YIVVMKDGVS…YVEQDQVVRI (80 aa)). N-linked (GlcNAc...) asparagine glycosylation is present at Asn-102. The Peptidase S8 domain maps to 128 to 399 (SWGLGRVSHR…NRLLYNGSGQ (272 aa)). Active-site charge relay system residues include Asp-160 and His-191. Asn-252 and Asn-308 each carry an N-linked (GlcNAc...) asparagine glycan. Ser-346 acts as the Charge relay system in catalysis. A glycan (N-linked (GlcNAc...) asparagine) is linked at Asn-395.

It belongs to the peptidase S8 family.

It localises to the secreted. In terms of biological role, secreted subtilisin-like serine protease with keratinolytic activity that contributes to pathogenicity. The protein is Subtilisin-like protease 4 (SUB4) of Trichophyton rubrum (Athlete's foot fungus).